Consider the following 314-residue polypeptide: S-methyl-5'-thioadenosine phosphorylase (314 aa).

Phosphate is bound by residues Ser31, 73–74 (RH), and 106–107 (SA). Substrate is bound at residue Met207. Residue Thr208 participates in phosphate binding. 231–233 (DYD) contributes to the substrate binding site.

Belongs to the PNP/MTAP phosphorylase family. MTAP subfamily. As to quaternary structure, homohexamer. Dimer of a homotrimer.

The catalysed reaction is S-methyl-5'-thioadenosine + phosphate = 5-(methylsulfanyl)-alpha-D-ribose 1-phosphate + adenine. It participates in amino-acid biosynthesis; L-methionine biosynthesis via salvage pathway; S-methyl-5-thio-alpha-D-ribose 1-phosphate from S-methyl-5'-thioadenosine (phosphorylase route): step 1/1. Its function is as follows. Catalyzes the reversible phosphorylation of S-methyl-5'-thioadenosine (MTA) to adenine and 5-methylthioribose-1-phosphate. Involved in the breakdown of MTA, a major by-product of polyamine biosynthesis. Responsible for the first step in the methionine salvage pathway after MTA has been generated from S-adenosylmethionine. Has broad substrate specificity with 6-aminopurine nucleosides as preferred substrates. This is S-methyl-5'-thioadenosine phosphorylase from Prochlorococcus marinus (strain SARG / CCMP1375 / SS120).